Reading from the N-terminus, the 151-residue chain is Large ribosomal subunit protein bL28c (151 aa).

The N-terminal 74 residues, 1-74 (MATMVAGISL…PFKPSLQPVA (74 aa)), are a transit peptide targeting the chloroplast.

The protein belongs to the bacterial ribosomal protein bL28 family. As to quaternary structure, part of the 50S ribosomal subunit.

Its subcellular location is the plastid. It is found in the chloroplast. The protein is Large ribosomal subunit protein bL28c (RPL28) of Nicotiana tabacum (Common tobacco).